Here is a 466-residue protein sequence, read N- to C-terminus: Zinc finger and SCAN domain-containing protein 26 (466 aa).

Lys-21 participates in a covalent cross-link: Glycyl lysine isopeptide (Lys-Gly) (interchain with G-Cter in SUMO2). In terms of domain architecture, SCAN box spans 42-124; that stretch reads CKQFRQLRYE…GILEDLQLDR (83 aa). 2 stretches are compositionally biased toward basic and acidic residues: residues 124–135 and 163–173; these read RGKAGEQKDSAQ and KPEERGKETRS. Positions 124–182 are disordered; it reads RGKAGEQKDSAQRSRPTVLVGEPAPRREAREQPGCALPQKPEERGKETRSENGNLIAGT. Residues 220-242 form a C2H2-type 1; degenerate zinc finger; the sequence is SQCLETKERLVQNSGLIEHDRAH. C2H2-type zinc fingers lie at residues 270–292, 298–320, 326–348, 354–376, 382–404, 410–432, and 438–460; these read HPCQ…QKIH, YQCK…LRIH, YLCI…QKIH, RECK…QRVH, HHCN…HRIH, FKCN…VRIH, and YKCS…QRHH.

It localises to the nucleus. Functionally, may be involved in transcriptional regulation. The protein is Zinc finger and SCAN domain-containing protein 26 (Zscan26) of Mus musculus (Mouse).